The primary structure comprises 98 residues: Cell cycle protein GpsB (98 aa).

Residues 34-72 (LDMVIKDYEAFHQEIEELQQENLQLKKQLEEANKRQPAQ) adopt a coiled-coil conformation.

Belongs to the GpsB family. In terms of assembly, forms polymers through the coiled coil domains. Interacts with PBP1, MreC and EzrA.

The protein localises to the cytoplasm. Functionally, divisome component that associates with the complex late in its assembly, after the Z-ring is formed, and is dependent on DivIC and PBP2B for its recruitment to the divisome. Together with EzrA, is a key component of the system that regulates PBP1 localization during cell cycle progression. Its main role could be the removal of PBP1 from the cell pole after pole maturation is completed. Also contributes to the recruitment of PBP1 to the division complex. Not essential for septum formation. In Bacillus licheniformis (strain ATCC 14580 / DSM 13 / JCM 2505 / CCUG 7422 / NBRC 12200 / NCIMB 9375 / NCTC 10341 / NRRL NRS-1264 / Gibson 46), this protein is Cell cycle protein GpsB.